A 1131-amino-acid polypeptide reads, in one-letter code: Probable chloride channel protein UM03490-D (1131 aa).

The next 12 membrane-spanning stretches (helical) occupy residues 137 to 157, 206 to 226, 305 to 325, 341 to 361, 380 to 397, 414 to 434, 485 to 505, 518 to 538, 577 to 597, 603 to 623, 643 to 663, and 680 to 702; these read GVIVLVGILIGLNMGVISLAT, VTVTASIGAAAAATDSAPILP, FPAWIIYMLFAGLLSFICAHL, IKCILAGFVINGYLGFWTLAI, GPAVHVACCIGNVVASFF, SSAAGVAVAFGSPIGGVLFSL, FEIMFYILIGIFGGLYGAFVI, YLVKHGVSEVVVLATLTAFVG, MVNSLLLATVLRTALVIVSYG, GIFVPSMAIGATFGRMVGILV, VPCITPGTYAFLGAAAALAGV, and ALTYILPTMIVVGITKGVADWFS. Disordered stretches follow at residues 815 to 835 and 858 to 928; these read DGVESSAHGAQQQQPDLLSVA and ATGA…AGGG. Residues 866-877 are compositionally biased toward low complexity; it reads GLGSTSATGVAS. In terms of domain architecture, CBS spans 944–1000; that stretch reads IDPTPLIVQPGMPLETVMDMFKNLGPRVILVVEYGRLSGLVTVKDVLKRIAMQEKAE. The span at 1061-1078 shows a compositional bias: low complexity; it reads RASASRGGAPGSQAGQAR. Residues 1061–1131 form a disordered region; it reads RASASRGGAP…VLGAQDDDDE (71 aa). Positions 1104-1113 are enriched in polar residues; that stretch reads STRQTSATKN.

This sequence belongs to the chloride channel (TC 2.A.49) family.

The protein resides in the membrane. In terms of biological role, voltage-gated chloride channel. In Mycosarcoma maydis (Corn smut fungus), this protein is Probable chloride channel protein UM03490-D.